The following is an 85-amino-acid chain: MAHKKGGGSSRNGRDSNAQRRGVKVYAGAPVRAGNILVRQVGSSIHAGHNVGTGRDFTLFALVDGVVTYEWKSNTKKQVSVYPAS.

The segment at 1–22 (MAHKKGGGSSRNGRDSNAQRRG) is disordered.

Belongs to the bacterial ribosomal protein bL27 family.

This Sorangium cellulosum (strain So ce56) (Polyangium cellulosum (strain So ce56)) protein is Large ribosomal subunit protein bL27.